A 68-amino-acid chain; its full sequence is Preprofallaxidin-5 (68 aa).

Residues 1–22 (MASLKKSLFLVLFLGFVSLSIC) form the signal peptide. The propeptide occupies 23 to 51 (EEEKREDKEDEGENEEAEENHEERSEEKR). Positions 24 to 50 (EEKREDKEDEGENEEAEENHEERSEEK) are disordered. Residues 30 to 42 (KEDEGENEEAEEN) are compositionally biased toward acidic residues. Leu-64 is modified (leucine amide). Residue Ser-68 is a propeptide.

Belongs to the frog skin active peptide (FSAP) family. Brevinin subfamily. Expressed by the skin glands.

The protein localises to the secreted. The protein is Preprofallaxidin-5 of Litoria fallax (Eastern dwarf tree frog).